A 335-amino-acid polypeptide reads, in one-letter code: Large ribosomal subunit protein uL3 (335 aa).

This sequence belongs to the universal ribosomal protein uL3 family. In terms of assembly, part of the 50S ribosomal subunit. Forms a cluster with proteins L14 and L24e.

In terms of biological role, one of the primary rRNA binding proteins, it binds directly near the 3'-end of the 23S rRNA, where it nucleates assembly of the 50S subunit. The sequence is that of Large ribosomal subunit protein uL3 from Methanocaldococcus jannaschii (strain ATCC 43067 / DSM 2661 / JAL-1 / JCM 10045 / NBRC 100440) (Methanococcus jannaschii).